The primary structure comprises 342 residues: Polygalacturonase inhibitor 3 (342 aa).

The first 29 residues, 1–29, serve as a signal peptide directing secretion; sequence MTQFNIPVTMSSSLSIILVILVSLRTALS. Disulfide bonds link Cys32–Cys62 and Cys63–Cys72. Asn64 carries an N-linked (GlcNAc...) asparagine glycan. 10 LRR repeats span residues 82 to 107, 108 to 132, 133 to 156, 157 to 180, 181 to 205, 206 to 228, 229 to 252, 253 to 275, 276 to 299, and 300 to 319; these read NNLD…LPYL, NFLY…LTQL, HYLY…IKTL, VTLD…LPNL, VGIT…SKLF, TSMT…NLNL, AFVD…DKNT, QKIH…SKNL, NGLD…LKFL, and HSLN…GGNL. Asn141 carries N-linked (GlcNAc...) asparagine glycosylation. N-linked (GlcNAc...) asparagine glycosylation is present at Asn303. Disulfide bonds link Cys310–Cys332 and Cys334–Cys341.

The protein belongs to the polygalacturonase-inhibiting protein family. Found in suspension-cultured cells and to a lesser extent in hypocotyls, leaves and flowers.

It localises to the secreted. The protein localises to the cell wall. The protein resides in the membrane. Its function is as follows. Inhibitor of fungal polygalacturonase. It is an important factor for plant resistance to phytopathogenic fungi. The protein is Polygalacturonase inhibitor 3 (PGIP3) of Phaseolus vulgaris (Kidney bean).